A 170-amino-acid polypeptide reads, in one-letter code: Lipoprotein signal peptidase (170 aa).

The next 3 membrane-spanning stretches (helical) occupy residues 12 to 32 (WYWV…WVLA), 67 to 87 (WQRW…TVWL), and 93 to 113 (SLWK…GNLI). Catalysis depends on residues D123 and D141. The helical transmembrane segment at 137–157 (FNIADSAIFIGAVLIIWDSFF) threads the bilayer.

It belongs to the peptidase A8 family.

The protein localises to the cell inner membrane. It catalyses the reaction Release of signal peptides from bacterial membrane prolipoproteins. Hydrolyzes -Xaa-Yaa-Zaa-|-(S,diacylglyceryl)Cys-, in which Xaa is hydrophobic (preferably Leu), and Yaa (Ala or Ser) and Zaa (Gly or Ala) have small, neutral side chains.. Its pathway is protein modification; lipoprotein biosynthesis (signal peptide cleavage). Functionally, this protein specifically catalyzes the removal of signal peptides from prolipoproteins. This Shewanella sp. (strain MR-4) protein is Lipoprotein signal peptidase.